A 173-amino-acid chain; its full sequence is NADH-ubiquinone oxidoreductase chain 6 (173 aa).

Helical transmembrane passes span 1-21, 25-45, 53-73, 87-107, and 141-161; these read MTYF…AVAS, PYFA…VLVG, LVLF…SAAL, VLGY…FFWG, and GGML…VLEL.

This sequence belongs to the complex I subunit 6 family.

It is found in the mitochondrion membrane. The enzyme catalyses a ubiquinone + NADH + 5 H(+)(in) = a ubiquinol + NAD(+) + 4 H(+)(out). In terms of biological role, core subunit of the mitochondrial membrane respiratory chain NADH dehydrogenase (Complex I) that is believed to belong to the minimal assembly required for catalysis. Complex I functions in the transfer of electrons from NADH to the respiratory chain. The immediate electron acceptor for the enzyme is believed to be ubiquinone. The protein is NADH-ubiquinone oxidoreductase chain 6 (MT-ND6) of Carassius auratus (Goldfish).